The primary structure comprises 706 residues: Polyribonucleotide nucleotidyltransferase (706 aa).

Residues Asp-486 and Asp-492 each coordinate Mg(2+). In terms of domain architecture, KH spans Pro-553–Ile-612. An S1 motif domain is found at Asn-622–Lys-690.

It belongs to the polyribonucleotide nucleotidyltransferase family. As to quaternary structure, component of the RNA degradosome, which is a multiprotein complex involved in RNA processing and mRNA degradation. Mg(2+) serves as cofactor.

The protein localises to the cytoplasm. The enzyme catalyses RNA(n+1) + phosphate = RNA(n) + a ribonucleoside 5'-diphosphate. Involved in mRNA degradation. Catalyzes the phosphorolysis of single-stranded polyribonucleotides processively in the 3'- to 5'-direction. In Yersinia enterocolitica serotype O:8 / biotype 1B (strain NCTC 13174 / 8081), this protein is Polyribonucleotide nucleotidyltransferase.